A 651-amino-acid polypeptide reads, in one-letter code: Acetyl-coenzyme A synthetase (651 aa).

CoA-binding positions include 189 to 192, threonine 311, and asparagine 335; that span reads RGGK. ATP contacts are provided by residues 387–389, 411–416, aspartate 500, and arginine 515; these read GEP and DTWWQT. Serine 523 lines the CoA pocket. Arginine 526 is a binding site for ATP. Mg(2+)-binding residues include valine 537, histidine 539, and valine 542. Arginine 584 is a CoA binding site. At lysine 609 the chain carries N6-acetyllysine.

Belongs to the ATP-dependent AMP-binding enzyme family. Mg(2+) is required as a cofactor. Post-translationally, acetylated. Deacetylation by the SIR2-homolog deacetylase activates the enzyme.

It catalyses the reaction acetate + ATP + CoA = acetyl-CoA + AMP + diphosphate. Functionally, catalyzes the conversion of acetate into acetyl-CoA (AcCoA), an essential intermediate at the junction of anabolic and catabolic pathways. AcsA undergoes a two-step reaction. In the first half reaction, AcsA combines acetate with ATP to form acetyl-adenylate (AcAMP) intermediate. In the second half reaction, it can then transfer the acetyl group from AcAMP to the sulfhydryl group of CoA, forming the product AcCoA. This chain is Acetyl-coenzyme A synthetase, found in Rhizobium etli (strain ATCC 51251 / DSM 11541 / JCM 21823 / NBRC 15573 / CFN 42).